A 394-amino-acid chain; its full sequence is Putative serine protease HhoA (394 aa).

The first 24 residues, methionine 1–glycine 24, serve as a signal peptide directing secretion. Positions methionine 293–aspartate 377 constitute a PDZ domain.

This sequence belongs to the peptidase S1C family.

The protein resides in the periplasm. Its function is as follows. A putative protease, its function overlaps that of the related putative proteases HhoB and HtrA. The chain is Putative serine protease HhoA (hhoA) from Synechocystis sp. (strain ATCC 27184 / PCC 6803 / Kazusa).